Consider the following 134-residue polypeptide: Transcription antitermination protein NusB (134 aa).

It belongs to the NusB family.

Functionally, involved in transcription antitermination. Required for transcription of ribosomal RNA (rRNA) genes. Binds specifically to the boxA antiterminator sequence of the ribosomal RNA (rrn) operons. The polypeptide is Transcription antitermination protein NusB (Halalkalibacterium halodurans (strain ATCC BAA-125 / DSM 18197 / FERM 7344 / JCM 9153 / C-125) (Bacillus halodurans)).